We begin with the raw amino-acid sequence, 1023 residues long: GATOR2 complex protein WDR24 (1023 aa).

7 WD repeats span residues 16–54 (NLGS…FKVT), 64–108 (SLNY…SKSV), 114–154 (DHSR…NASK), 159–199 (PKSE…IAVE), 203–243 (SHQG…SLNN), 245–287 (STIS…IPLF), and 291–329 (DHRD…KPYQ). The span at 563 to 578 (SKNIIDNSNDSNQEIN) shows a compositional bias: low complexity. Disordered regions lie at residues 563–621 (SKNI…EPPS) and 661–824 (QKST…SIEN). Residues 584-593 (KEDEEEDDDN) show a composition bias toward acidic residues. Residues 661 to 681 (QKSTDNISDNNSNVHVNIKRQ) show a composition bias toward polar residues. The span at 682 to 695 (NQPTNNNNNNSNID) shows a compositional bias: low complexity. A compositionally biased stretch (basic and acidic residues) spans 696-742 (NLEKKSNKSKSTKENKESSLTDQNKQKRNDNKEKIDNNEIDNDNKDN). Positions 743–759 (NDDDDNDVDNIGEDNDE) are enriched in acidic residues. Residues 760 to 812 (INNNNDNNNNNNNNNNNNNNNNNNNNNNNNNNNNNNNNKNNNNDNNNNNNINN) are compositionally biased toward low complexity. The segment at 947 to 969 (ACSSCGKSIPQNSIICEKCNKAS) adopts a C4-type zinc-finger fold. Residues Cys948, Cys951, Cys962, Cys965, Cys972, Cys975, Cys986, Cys989, His991, His994, His997, Cys1010, Cys1014, His1016, and Cys1018 each contribute to the Zn(2+) site. The RING-type; atypical zinc-finger motif lies at 970–1021 (SKCSICRLPVKGMWVWCQGCGHGGHLEHMKSWFIDKNQKSCPTGCTHICTPF).

This sequence belongs to the WD repeat WDR24 family. Probably part of the GATOR complex.

Its subcellular location is the lysosome membrane. The catalysed reaction is S-ubiquitinyl-[E2 ubiquitin-conjugating enzyme]-L-cysteine + [acceptor protein]-L-lysine = [E2 ubiquitin-conjugating enzyme]-L-cysteine + N(6)-ubiquitinyl-[acceptor protein]-L-lysine.. Its pathway is protein modification; protein ubiquitination. As a component of the GATOR complex may function in the amino acid-sensing branch of the TORC1 signaling pathway. This is GATOR2 complex protein WDR24 from Dictyostelium discoideum (Social amoeba).